The chain runs to 699 residues: Transcription factor MYC2 (699 aa).

The interval Pro25 to Ala60 is disordered. Residues Ile93–Glu158 are JAZ-interaction domain. Residues Asp290–Arg530 are disordered. A compositionally biased stretch (polar residues) spans His306–Pro321. Composition is skewed to low complexity over residues Pro335–Gln349 and Ser387–Leu412. Composition is skewed to polar residues over residues Phe413–Pro449 and Ser459–Thr472. Residues Ser478–Ser494 show a composition bias toward basic and acidic residues. The short motif at Lys506–Lys514 is the Nuclear localization signal element. The segment covering Arg507–Ala516 has biased composition (basic residues). Basic and acidic residues predominate over residues Asn517–Arg530. The tract at residues Glu520 to Arg533 is basic motif; degenerate. Residues Glu520–Leu569 form the bHLH domain. The segment at Glu534 to Leu569 is helix-loop-helix motif. The tract at residues Thr582–Arg611 is disordered.

The protein belongs to the bHLH protein family. As to quaternary structure, interacts with TIFY3/JAZ1. In terms of tissue distribution, highly expressed in spikelets and floral organs.

The protein localises to the nucleus. Its function is as follows. Transcriptional activator involved in jasmonate (JA) signaling pathway during spikelet development. Binds to the G2 region G-box (5'-CACGTG-3') of the MADS1 promoter and thus directly regulates the expression of MADS1. Its function in MADS1 activation is abolished by TIFY3/JAZ1 which directly target MYC2 during spikelet development. In Oryza sativa subsp. japonica (Rice), this protein is Transcription factor MYC2.